Consider the following 425-residue polypeptide: Histidine--tRNA ligase (425 aa).

This sequence belongs to the class-II aminoacyl-tRNA synthetase family. In terms of assembly, homodimer.

It is found in the cytoplasm. The enzyme catalyses tRNA(His) + L-histidine + ATP = L-histidyl-tRNA(His) + AMP + diphosphate + H(+). This is Histidine--tRNA ligase from Shewanella sp. (strain W3-18-1).